A 424-amino-acid chain; its full sequence is MNADRQDVSLLMEEIGVAARSASRLLAQAPTKQKDAALLAAAMAVRANIDDILAANAEDVADAVKSGTAPSLIDRMTLDTKRIEAIARALEEIAALPDPVGATMAEWDRPNGLHISRVRVPLGVIGIIYESRPNVTADAGALCLKSGNAAILRGGSDAMRSSQAIHASILEGVIAAGLPEAAIQLVPTSDRGAVGEMLKGLGGNLDVIVPRGGKSLVARVQEEARVPVFAHLEGVCHVYVDGEADLDMARNIVLNAKLRRTGVCGAAETLLVDEACAATHLAPLVAALIAEGCEVRGDEAAQKADPRVKPATEDDWYTEYLDSIIAVRVVKGVKDAISHIAKYGSSHTEAIVTANQVTADRFLAEVDSAIVLHNASTQFADGGEFGMGAEIGIATGKFHARGPVGVEQLTSFKYLVRGSGQVRP.

This sequence belongs to the gamma-glutamyl phosphate reductase family.

The protein resides in the cytoplasm. The catalysed reaction is L-glutamate 5-semialdehyde + phosphate + NADP(+) = L-glutamyl 5-phosphate + NADPH + H(+). It participates in amino-acid biosynthesis; L-proline biosynthesis; L-glutamate 5-semialdehyde from L-glutamate: step 2/2. Its function is as follows. Catalyzes the NADPH-dependent reduction of L-glutamate 5-phosphate into L-glutamate 5-semialdehyde and phosphate. The product spontaneously undergoes cyclization to form 1-pyrroline-5-carboxylate. The sequence is that of Gamma-glutamyl phosphate reductase from Parvibaculum lavamentivorans (strain DS-1 / DSM 13023 / NCIMB 13966).